The primary structure comprises 328 residues: Formimidoylglutamase (328 aa).

Mn(2+) contacts are provided by histidine 133, aspartate 159, histidine 161, aspartate 163, aspartate 253, and aspartate 255.

It belongs to the arginase family. Mn(2+) is required as a cofactor.

It catalyses the reaction N-formimidoyl-L-glutamate + H2O = formamide + L-glutamate. It functions in the pathway amino-acid degradation; L-histidine degradation into L-glutamate; L-glutamate from N-formimidoyl-L-glutamate (hydrolase route): step 1/1. Catalyzes the conversion of N-formimidoyl-L-glutamate to L-glutamate and formamide. This Streptococcus pyogenes serotype M1 protein is Formimidoylglutamase.